The sequence spans 1872 residues: MHTVCLLPLLFFTIGGCLGSSRPFRTFVVTDTTLTHLAVHRVTGEVFVGAVNRVFKLASNLTELRAHVTGPIEDNARCYPPPSMRVCSHRLVPVDNVNKLLLIDYAARRLVACGSIWQGICQFLRLDDLFKLGEPHHRKEHYLSGAQEPDSMAGVIVEQGQGPSKLFVGTAVDGKSEYFPTLSSRKLIDDEDSGDMFSLVYQDEFVSSQIKIPSDTLSLYPAFDIYYIYGFVSASFVYFLTLQLDTQQTLLDTAGEKFFTSKIVRMCAGDSEFYSYVEFPIGCSWRGVEYRLVQSAHLAKPGLLLAQALGVPADEDVLFTIFSQGQKNRANPPRQTILCLFTLSSINAHIRRRIQSCYRGEGTLALPWLLNKELPCINTPMQINGNFCGLVLNQPLGGLHVIEGLPLLADSTDGMASVAAYTYHQHSVVFIGTRSGNLKKVRVDGSQDAQLYETVSVVQGTPILRDLLFSPDHRHIYLLSEKQVSQLPVETCEQYLSCAACLGSGDPHCGWCVLQHRCCREGACPGASAPHGFAEELNKCIQVRVRPNNVSVTSSGVQLTVAMRNVPDLSLGVSCSFEEVTESEAILLPSGELRCPSPSLQELQTLTRGHGATHTVRLQLLSMETGVRFAGVDFVFYNCSALQSCMSCVGSPYPCHWCKYRHVCTSHPHECSFQEGRVHSPEGCPEILPRGDLLIPVGVMQPLTLRAKNLPQPQSGQKNYECVVRVQGRQHRVPAVRFNSSSVQCQNASYFYEGDEFGDTELDFSVVWDGDFPIDKPPSFRALLYKCWAQRPSCGLCLKADPRFNCGWCISEHRCQLRVHCPAPKSNWMHPSQKGARCSHPRITQIHPLTGPKEGGTRVTIVGENLGLTSREVGLRVAGVRCNSIPTEYVSAERIVCEMEESLVPSPPPGPAELCVGDCSADFRTQSQQLYSFVTPTLDRVSPTRGPASGGTRLTISGTSLDAGSRVTVIIRDGECQFVRRDAEAIVCISPISTLGPSQAPIILAIDHANISSTGVIYTYTQDPTVTHLEPTWSIINGSTSITVSGTHLLTVQEPRVRAKYRGIETTNTCQVINDTAMLCKAPGIFLGHPQPRAQGEHPDEFGFLLDHVQAARSLNRSSFTYYPDPSFEPLGPSGVLDVKPGSHVVLKGKNLIPAAAGSSRLNYTVLIGGQPCALTVSDTQLLCDSPSQTGRQPVMVLVGGLEFWLGTLHITADRALTLPAMVGLAAGGGLLLLAITVVLVAYKRKTQDADRTLKRLQLQMDNLESRVALECKEAFAELQTDINELTNHMDGVQIPFLDYRTYAVRVLFPGIEAHPVLKELDTPPNVEKALRLFGQLLHSRAFLLTFIHTLEAQSSFSMRDRGTVASLTMVALQSRLDYATGLLKQLLADLIEKNLESKNHPKLLLRRTESVAEKMLTNWFTFLLHKFLKECAGEPLFLLYCAIKQQMEKGPIDAITGEARYSLSEDKLIRQQIDYKTLTLHCVCPESEGSAQVPVKVLNCDSITQAKDKLLDTVYKGIPYSQRPKAEDMDLEWRQGRMARIILQDEDITTKIECDWKRINSLAHYQVTDGSLVALVPKQVSAYNMANSFTFTRSLSRYESLLRAASSPDSLRSRAPMLTPDQEAGTKLWHLVKNHDHADHREGDRGSKMVSEIYLTRLLATKGTLQKFVDDLFETVFSTAHRGSALPLAIKYMFDFLDEQADQRQISDPDVRHTWKSNCLPLRFWVNVIKNPQFVFDIHKNSITDACLSVVAQTFMDSCSTSEHRLGKDSPSNKLLYAKDIPNYKSWVERYYRDIAKMASISDQDMDAYLVEQSRLHANDFNVLSALSELYFYVTKYRQEILTSLDRDASCRKHKLRQKLEQIITLVSSSS.

The N-terminal stretch at 1–19 (MHTVCLLPLLFFTIGGCLG) is a signal peptide. Positions 20-489 (SSRPFRTFVV…SEKQVSQLPV (470 aa)) constitute a Sema domain. At 20–1220 (SSRPFRTFVV…ITADRALTLP (1201 aa)) the chain is on the extracellular side. N-linked (GlcNAc...) asparagine glycosylation occurs at Asn-60. 9 disulfides stabilise this stretch: Cys-78-Cys-87, Cys-113-Cys-121, Cys-267-Cys-388, Cys-283-Cys-339, Cys-357-Cys-376, Cys-492-Cys-509, Cys-498-Cys-540, Cys-501-Cys-518, and Cys-512-Cys-524. A glycan (N-linked (GlcNAc...) asparagine) is linked at Asn-549. Cys-575 and Cys-595 are disulfide-bonded. 4 consecutive IPT/TIG domains span residues 841-934 (PRIT…YSFV), 936-1021 (PTLD…YTYT), 1024-1123 (PTVT…FTYY), and 1126-1212 (PSFE…LHIT). Residue Asn-1163 is glycosylated (N-linked (GlcNAc...) asparagine). A helical membrane pass occupies residues 1221-1241 (AMVGLAAGGGLLLLAITVVLV). Positions 1240–1294 (LVAYKRKTQDADRTLKRLQLQMDNLESRVALECKEAFAELQTDINELTNHMDGVQ) form a coiled coil. Topologically, residues 1242–1872 (AYKRKTQDAD…QIITLVSSSS (631 aa)) are cytoplasmic. Ser-1597 carries the phosphoserine modification.

The protein belongs to the plexin family.

The protein localises to the cell membrane. Its function is as follows. Coreceptor for SEMA3A and SEMA3F. Necessary for signaling by class 3 semaphorins and subsequent remodeling of the cytoskeleton. Plays a role in axon guidance in the developing nervous system. Regulates the migration of sympathetic neurons, but not of neural crest precursors. Required for normal dendrite spine morphology in pyramidal neurons. May play a role in regulating semaphorin-mediated programmed cell death in the developing nervous system. Class 3 semaphorins bind to a complex composed of a neuropilin and a plexin. The plexin modulates the affinity of the complex for specific semaphorins, and its cytoplasmic domain is required for the activation of down-stream signaling events in the cytoplasm. The chain is Plexin-A3 (Plxna3) from Rattus norvegicus (Rat).